Here is a 248-residue protein sequence, read N- to C-terminus: 4-hydroxy-tetrahydrodipicolinate reductase (248 aa).

NAD(+) contacts are provided by residues Asp-32, Gly-74–Thr-76, and Ser-99–Phe-102. His-134 (proton donor/acceptor) is an active-site residue. His-135 provides a ligand contact to (S)-2,3,4,5-tetrahydrodipicolinate. The Proton donor role is filled by Lys-138. Gly-144 to Thr-145 is a (S)-2,3,4,5-tetrahydrodipicolinate binding site.

Belongs to the DapB family.

Its subcellular location is the cytoplasm. The enzyme catalyses (S)-2,3,4,5-tetrahydrodipicolinate + NAD(+) + H2O = (2S,4S)-4-hydroxy-2,3,4,5-tetrahydrodipicolinate + NADH + H(+). It catalyses the reaction (S)-2,3,4,5-tetrahydrodipicolinate + NADP(+) + H2O = (2S,4S)-4-hydroxy-2,3,4,5-tetrahydrodipicolinate + NADPH + H(+). The protein operates within amino-acid biosynthesis; L-lysine biosynthesis via DAP pathway; (S)-tetrahydrodipicolinate from L-aspartate: step 4/4. Functionally, catalyzes the conversion of 4-hydroxy-tetrahydrodipicolinate (HTPA) to tetrahydrodipicolinate. The protein is 4-hydroxy-tetrahydrodipicolinate reductase of Pelodictyon phaeoclathratiforme (strain DSM 5477 / BU-1).